Here is a 155-residue protein sequence, read N- to C-terminus: Aspartate carbamoyltransferase regulatory chain (155 aa).

4 residues coordinate Zn(2+): cysteine 113, cysteine 118, cysteine 139, and cysteine 142.

The protein belongs to the PyrI family. In terms of assembly, contains catalytic and regulatory chains. Zn(2+) is required as a cofactor.

Functionally, involved in allosteric regulation of aspartate carbamoyltransferase. This is Aspartate carbamoyltransferase regulatory chain from Methanosphaerula palustris (strain ATCC BAA-1556 / DSM 19958 / E1-9c).